Here is a 96-residue protein sequence, read N- to C-terminus: Protein YddL (96 aa).

The signal sequence occupies residues 1–21 (MKLKIVAVVVTGLLAANVAHA).

In Escherichia coli (strain K12), this protein is Protein YddL (yddL).